Reading from the N-terminus, the 274-residue chain is Photosystem II extrinsic protein O (274 aa).

The signal sequence occupies residues Met1–Ala28.

It belongs to the PsbO family. In terms of assembly, PSII is composed of 1 copy each of membrane proteins PsbA, PsbB, PsbC, PsbD, PsbE, PsbF, PsbH, PsbI, PsbJ, PsbK, PsbL, PsbM, PsbT, PsbX, PsbY, PsbZ, Psb30/Ycf12, peripheral proteins PsbO, CyanoQ (PsbQ), PsbU, PsbV and a large number of cofactors. It forms dimeric complexes. Contacts PsbQ.

The protein localises to the cellular thylakoid membrane. Its function is as follows. One of the extrinsic, lumenal subunits of photosystem II (PSII), which stabilize and protect the oxygen-evolving complex. PSII is a light-driven water plastoquinone oxidoreductase, using light energy to abstract electrons from H(2)O, generating a proton gradient subsequently used for ATP formation. Required for dimerization of PSII and for binding of PsbQ to PSII. The polypeptide is Photosystem II extrinsic protein O (Synechocystis sp. (strain ATCC 27184 / PCC 6803 / Kazusa)).